Reading from the N-terminus, the 282-residue chain is Putative phosphoenolpyruvate synthase regulatory protein (282 aa).

Residue 161 to 168 coordinates ADP; sequence GVSRSGKT.

It belongs to the pyruvate, phosphate/water dikinase regulatory protein family. PSRP subfamily.

The enzyme catalyses [pyruvate, water dikinase] + ADP = [pyruvate, water dikinase]-phosphate + AMP + H(+). The catalysed reaction is [pyruvate, water dikinase]-phosphate + phosphate + H(+) = [pyruvate, water dikinase] + diphosphate. Functionally, bifunctional serine/threonine kinase and phosphorylase involved in the regulation of the phosphoenolpyruvate synthase (PEPS) by catalyzing its phosphorylation/dephosphorylation. The polypeptide is Putative phosphoenolpyruvate synthase regulatory protein (Janthinobacterium sp. (strain Marseille) (Minibacterium massiliensis)).